The chain runs to 370 residues: uncharacterized protein (370 aa).

Helical transmembrane passes span 6–26, 49–69, 79–99, 111–131, 143–163, 167–187, 206–226, 236–256, 307–327, and 333–353; these read AVVFILAAFLLWGAADYCLGN, IGIVSLAPVLAAILIPIVAPF, SFANTILAIDMGGYALAGEMA, FLGTMMGPAIVFTIPVALGII, ILIGLCTVPIGCLIGGLCAGF, MIGKNLLIPSLLSAVIAFGLW, MVAIIGLAAVSVETMTGIVLI, IQTTGTIAIALAGAFPMTAFI, VAFAVSGAFVLGSHLGFVAGM, and AAMIIGKLAGGVTAAAAAAWM.

It belongs to the EutH family.

It localises to the cell membrane. This is an uncharacterized protein from Bacillus subtilis (strain 168).